The primary structure comprises 445 residues: Tubulin alpha-1 chain (445 aa).

Residue glutamine 11 coordinates GTP. Lysine 40 bears the N6-acetyllysine mark. Residues glutamate 71, serine 140, glycine 144, threonine 145, threonine 179, asparagine 206, and asparagine 228 each coordinate GTP. Mg(2+) is bound at residue glutamate 71. Residue glutamate 254 is part of the active site.

This sequence belongs to the tubulin family. In terms of assembly, dimer of alpha and beta chains. A typical microtubule is a hollow water-filled tube with an outer diameter of 25 nm and an inner diameter of 15 nM. Alpha-beta heterodimers associate head-to-tail to form protofilaments running lengthwise along the microtubule wall with the beta-tubulin subunit facing the microtubule plus end conferring a structural polarity. Microtubules usually have 13 protofilaments but different protofilament numbers can be found in some organisms and specialized cells. It depends on Mg(2+) as a cofactor. Post-translationally, acetylation of alpha chains at Lys-40 stabilizes microtubules and affects affinity and processivity of microtubule motors. This modification has a role in multiple cellular functions, ranging from cell motility, cell cycle progression or cell differentiation to intracellular trafficking and signaling.

The protein localises to the cytoplasm. The protein resides in the cytoskeleton. It catalyses the reaction GTP + H2O = GDP + phosphate + H(+). In terms of biological role, tubulin is the major constituent of microtubules, a cylinder consisting of laterally associated linear protofilaments composed of alpha- and beta-tubulin heterodimers. Microtubules grow by the addition of GTP-tubulin dimers to the microtubule end, where a stabilizing cap forms. Below the cap, tubulin dimers are in GDP-bound state, owing to GTPase activity of alpha-tubulin. This chain is Tubulin alpha-1 chain, found in Stylonychia lemnae (Ciliate).